Consider the following 255-residue polypeptide: EEF1A lysine methyltransferase 4 (255 aa).

Residues W26 and Y30 each contribute to the S-adenosyl-L-methionine site. Residue Y39 is modified to Phosphotyrosine. S-adenosyl-L-methionine contacts are provided by residues W41, G66, 88–89 (DY), 113–114 (DV), and K130. The short motif at 129–134 (EKGTLD) is the Required for methyltransferase activity element.

This sequence belongs to the methyltransferase superfamily.

It catalyses the reaction L-lysyl-[protein] + S-adenosyl-L-methionine = N(6)-methyl-L-lysyl-[protein] + S-adenosyl-L-homocysteine + H(+). The enzyme catalyses N(6)-methyl-L-lysyl-[protein] + S-adenosyl-L-methionine = N(6),N(6)-dimethyl-L-lysyl-[protein] + S-adenosyl-L-homocysteine + H(+). The catalysed reaction is N(6),N(6)-dimethyl-L-lysyl-[protein] + S-adenosyl-L-methionine = N(6),N(6),N(6)-trimethyl-L-lysyl-[protein] + S-adenosyl-L-homocysteine + H(+). Protein-lysine methyltransferase that efficiently catalyzes three successive methylations on 'Lys-36' in eukaryotic translation elongation factor 1 alpha (EEF1A1 or EEF1A2). In Bos taurus (Bovine), this protein is EEF1A lysine methyltransferase 4.